A 395-amino-acid polypeptide reads, in one-letter code: MKRFLLCSFALVLLYPAGIDMYLVGLPRIAVDLNASESQLHIAFSVYLAGMATAMLFAGKIADQSGRKPVAIVGAIVFMMASLLCSRASEGSLFLSGRFLQGIGAGGCYVVAFAILRDTLDEHRRAKVLSLLNGITCIVPVLAPVVGHLIMLRFPWQSLFYTMSAMGIIVGLLSLFILRETRPVRLAPRDLSRSSPAAESLINRFFVSRLAITTLSVSVILTFVNASPVLLMEVMGFSRGDYAITMALTAGVSMVVSFSTPFALGLFKPRTLMLVSQGLFLTAGVTLSLAHTNTVTLFGLTLICAGFSVGFGVAMSQALGPFSLRAGVASSTLGIAQVCGSSLWIWLAAILGISAMNMLIGILIGCSIVSILLIFSVAPNRSVAEHEEIPYQSRP.

Residues 1 to 3 (MKR) are Cytoplasmic-facing. A helical transmembrane segment spans residues 4 to 24 (FLLCSFALVLLYPAGIDMYLV). The Periplasmic portion of the chain corresponds to 25 to 41 (GLPRIAVDLNASESQLH). A helical transmembrane segment spans residues 42–62 (IAFSVYLAGMATAMLFAGKIA). The Cytoplasmic portion of the chain corresponds to 63 to 68 (DQSGRK). A helical transmembrane segment spans residues 69–89 (PVAIVGAIVFMMASLLCSRAS). Topologically, residues 90–92 (EGS) are periplasmic. The chain crosses the membrane as a helical span at residues 93-113 (LFLSGRFLQGIGAGGCYVVAF). Residues 114 to 130 (AILRDTLDEHRRAKVLS) lie on the Cytoplasmic side of the membrane. A helical transmembrane segment spans residues 131–151 (LLNGITCIVPVLAPVVGHLIM). The Periplasmic segment spans residues 152–157 (LRFPWQ). Residues 158–178 (SLFYTMSAMGIIVGLLSLFIL) form a helical membrane-spanning segment. Topologically, residues 179–216 (RETRPVRLAPRDLSRSSPAAESLINRFFVSRLAITTLS) are cytoplasmic. Residues 217–237 (VSVILTFVNASPVLLMEVMGF) form a helical membrane-spanning segment. Residues 238 to 246 (SRGDYAITM) lie on the Periplasmic side of the membrane. The helical transmembrane segment at 247–267 (ALTAGVSMVVSFSTPFALGLF) threads the bilayer. The Cytoplasmic segment spans residues 268 to 270 (KPR). Residues 271–291 (TLMLVSQGLFLTAGVTLSLAH) traverse the membrane as a helical segment. At 292–294 (TNT) the chain is on the periplasmic side. A helical transmembrane segment spans residues 295–315 (VTLFGLTLICAGFSVGFGVAM). Residues 316 to 332 (SQALGPFSLRAGVASST) are Cytoplasmic-facing. Residues 333–353 (LGIAQVCGSSLWIWLAAILGI) traverse the membrane as a helical segment. The Periplasmic segment spans residues 354–357 (SAMN). A helical membrane pass occupies residues 358 to 378 (MLIGILIGCSIVSILLIFSVA). Topologically, residues 379–395 (PNRSVAEHEEIPYQSRP) are cytoplasmic.

It belongs to the major facilitator superfamily. DHA1 family. MdtL (TC 2.A.1.2.22) subfamily.

Its subcellular location is the cell inner membrane. This Salmonella choleraesuis (strain SC-B67) protein is Multidrug resistance protein MdtL (mdtL).